The following is a 274-amino-acid chain: Bis(5'-nucleosyl)-tetraphosphatase, symmetrical (274 aa).

Belongs to the Ap4A hydrolase family.

It carries out the reaction P(1),P(4)-bis(5'-adenosyl) tetraphosphate + H2O = 2 ADP + 2 H(+). Hydrolyzes diadenosine 5',5'''-P1,P4-tetraphosphate to yield ADP. In Shewanella baltica (strain OS155 / ATCC BAA-1091), this protein is Bis(5'-nucleosyl)-tetraphosphatase, symmetrical.